The sequence spans 180 residues: Transmembrane protein 190 (180 aa).

The first 21 residues, 1 to 21, serve as a signal peptide directing secretion; the sequence is MVGSGIPALGLLLLMQGSADG. Topologically, residues 22 to 81 are extracellular; it reads NGIQGFFYPWSCEGDVWDRESCGGQAAIENPNLCLRLRCCYRDGVCYHQRPDENMRRKHM. Positions 31 to 71 constitute a P-type domain; that stretch reads WSCEGDVWDRESCGGQAAIENPNLCLRLRCCYRDGVCYHQR. 3 cysteine pairs are disulfide-bonded: cysteine 33-cysteine 61, cysteine 43-cysteine 60, and cysteine 55-cysteine 67. Residues 82-102 traverse the membrane as a helical segment; the sequence is WALGWTCGGLLFLITSICLFW. Over 103–180 the chain is Cytoplasmic; sequence WARRHDMLRL…EETEGGDEDD (78 aa). Basic and acidic residues predominate over residues 131 to 140; that stretch reads KDRTPSEKKT. The segment at 131-180 is disordered; the sequence is KDRTPSEKKTPSVGSIPPAAPTEGALDVSGGTEGEGTEGGEETEGGDEDD. Residues 165-180 are compositionally biased toward acidic residues; it reads EGTEGGEETEGGDEDD.

It is found in the membrane. The polypeptide is Transmembrane protein 190 (TMEM190) (Bos taurus (Bovine)).